A 113-amino-acid chain; its full sequence is P antigen family member 3 (113 aa).

Residues methionine 1–arginine 12 show a composition bias toward basic residues. Disordered stretches follow at residues methionine 1 to leucine 61 and serine 78 to valine 113.

The protein belongs to the GAGE family.

The polypeptide is P antigen family member 3 (PAGE3) (Homo sapiens (Human)).